A 76-amino-acid chain; its full sequence is Spermatid nuclear transition protein 3 (76 aa).

Residues 1–11 show a composition bias toward polar residues; it reads AKVTEKSWQPQ. Disordered regions lie at residues 1 to 34 and 56 to 76; these read AKVT…GKVR and VITT…ETIP. The span at 16 to 34 shows a compositional bias: basic residues; it reads KRWKKRKTPSQPRSRGKVR.

The protein localises to the nucleus. It localises to the chromosome. Involved in nuclear basic protein transition: histones are replaced by spermatid specific proteins which are themselves replaced by protamines in late spermatids. This chain is Spermatid nuclear transition protein 3 (TNP3), found in Sus scrofa (Pig).